A 90-amino-acid chain; its full sequence is Co-chaperonin GroES (90 aa).

It belongs to the GroES chaperonin family. Heptamer of 7 subunits arranged in a ring. Interacts with the chaperonin GroEL.

The protein localises to the cytoplasm. Together with the chaperonin GroEL, plays an essential role in assisting protein folding. The GroEL-GroES system forms a nano-cage that allows encapsulation of the non-native substrate proteins and provides a physical environment optimized to promote and accelerate protein folding. GroES binds to the apical surface of the GroEL ring, thereby capping the opening of the GroEL channel. The protein is Co-chaperonin GroES of Borreliella afzelii (strain PKo) (Borrelia afzelii).